A 329-amino-acid chain; its full sequence is Beta-ketoacyl-[acyl-carrier-protein] synthase III (329 aa).

Residues Cys-123 and His-256 contribute to the active site. Residues 257–261 form an ACP-binding region; it reads QANVR. Asn-286 is an active-site residue.

It belongs to the thiolase-like superfamily. FabH family. As to quaternary structure, homodimer.

Its subcellular location is the cytoplasm. The enzyme catalyses malonyl-[ACP] + acetyl-CoA + H(+) = 3-oxobutanoyl-[ACP] + CO2 + CoA. It participates in lipid metabolism; fatty acid biosynthesis. Its function is as follows. Catalyzes the condensation reaction of fatty acid synthesis by the addition to an acyl acceptor of two carbons from malonyl-ACP. Catalyzes the first condensation reaction which initiates fatty acid synthesis and may therefore play a role in governing the total rate of fatty acid production. Possesses both acetoacetyl-ACP synthase and acetyl transacylase activities. Its substrate specificity determines the biosynthesis of branched-chain and/or straight-chain of fatty acids. The protein is Beta-ketoacyl-[acyl-carrier-protein] synthase III of Bordetella parapertussis (strain 12822 / ATCC BAA-587 / NCTC 13253).